The sequence spans 326 residues: Porphobilinogen deaminase (326 aa).

Cys251 is subject to S-(dipyrrolylmethanemethyl)cysteine.

This sequence belongs to the HMBS family. The cofactor is dipyrromethane.

It catalyses the reaction 4 porphobilinogen + H2O = hydroxymethylbilane + 4 NH4(+). It participates in porphyrin-containing compound metabolism; protoporphyrin-IX biosynthesis; coproporphyrinogen-III from 5-aminolevulinate: step 2/4. In terms of biological role, tetrapolymerization of the monopyrrole PBG into the hydroxymethylbilane pre-uroporphyrinogen in several discrete steps. In Eremothecium gossypii (strain ATCC 10895 / CBS 109.51 / FGSC 9923 / NRRL Y-1056) (Yeast), this protein is Porphobilinogen deaminase (HEM3).